Reading from the N-terminus, the 186-residue chain is Ribosome-recycling factor (186 aa).

Belongs to the RRF family.

It localises to the cytoplasm. Its function is as follows. Responsible for the release of ribosomes from messenger RNA at the termination of protein biosynthesis. May increase the efficiency of translation by recycling ribosomes from one round of translation to another. This is Ribosome-recycling factor from Azorhizobium caulinodans (strain ATCC 43989 / DSM 5975 / JCM 20966 / LMG 6465 / NBRC 14845 / NCIMB 13405 / ORS 571).